The primary structure comprises 793 residues: Transcription factor castor (793 aa).

Positions 44 to 53 are enriched in polar residues; it reads NEDISSSTSV. Disordered regions lie at residues 44–101, 199–259, and 272–296; these read NEDI…NLIA, VTST…HTNA, and LEST…DSSY. Composition is skewed to low complexity over residues 54 to 68, 81 to 98, and 210 to 221; these read QQQQ…QQPQ, SSQN…PNSN, and ATPAPSAGATAG. At T211 the chain carries Phosphothreonine. The residue at position 215 (S215) is a Phosphoserine. A compositionally biased stretch (acidic residues) spans 233-242; it reads ESADDDEDDD. Over residues 245–254 the composition is skewed to low complexity; it reads LSSLTSCSSS. Over residues 273-284 the composition is skewed to polar residues; that stretch reads ESTTDSLDSPSM. The C2H2-type 1; atypical zinc-finger motif lies at 377 to 402; it reads FHCHEEPCQGKILSKKDDIIRHLKWH. C2H2-type zinc fingers lie at residues 439-463, 498-522, and 556-580; these read YHCV…ANFH, YHCC…KTYH, and IHCV…KRKH. The segment at 599 to 682 is disordered; sequence EESSLDAMPQ…RLKVEDESSN (84 aa). The span at 608–629 shows a compositional bias: low complexity; that stretch reads QQQQQQQQQQPTSLSQSQSSSS. Residues 630 to 644 show a composition bias toward polar residues; it reads VCGGSNTSTPLSSLS. The a.T hook DNA-binding region spans 650–662; that stretch reads ARKRGRPPKKIQL.

In terms of tissue distribution, expressed in a specific subset of neuroblasts in the ventral nerve cord and the procephalic region in the embryo. Expressed in many, if not all, late delaminating NBs, and in early NBs, but only after they have undergone several rounds of ganglion mother cell-producing divisions.

The protein localises to the nucleus. Transcription factor that specifies expression of key genes in developing central nervous system (CNS). Essential for many, if not all, late developing neuroblastoma (NB) sublineages. Binds to the 5'-[CG]C[CT][CT]AAAAA[AT]-3' DNA sequence, like hb, suggesting that cas and hb act as a late regulators in early and late CNS NB sublineage, respectively. Acts by repressing expression of nub/pdm-1 and pdm2/pdm-2 POU genes, and restrict their pattern of expression in appropriate cells. Required for a full expression of vvl/drifter and acj6/I-POU; it is however unknown whether it directly activates these genes. Controls engrailed (en) expression in the ventral nerve cord. The protein is Transcription factor castor (cas) of Drosophila melanogaster (Fruit fly).